Reading from the N-terminus, the 428-residue chain is MRLELGKIFIKDVQFGEKTTVEKGVLYVNKQEIIDLAMQDDRIKSVNVELARPGESVRIAPVKDVIEPRVKVEGSGAMFPGMTNKVKTVGSGRTHALVGSTVLTCGKIVGFQEGVIDMSGPIAKYCPFSETNNVCIVVEPVEGLETHAYEAAARMVGLKAAEYVGKAGLDVEPDEVVVYETKPLLEQIKEYPDLPKVAYVHMLQSQGLLHDTYYYGVDAKQFIPTFMYPTEIMDGAITSGNCVAPCDKVTTFHHLNNPVIEDLYKRHGKDLNSVGVILTNENVYLADKERCSDMVGKLVEFLGIDGVLITEEGYGNPDTDLMMNCKKCTQAGAKVVLITDEFPGRDGKSQSVADATPEADAVASCGQGNLIEHFPAMDKVIGMLDYVETMIGGYKGCINEDGSFDAELQIIIASTIANGYNKLTARFY.

At Cys-242 the chain carries Pyruvic acid (Cys).

As to quaternary structure, heterotetramer of two alpha and two beta subunits. Component of the sarcosine reductase complex, together with components A and C. PB is substrate specific. The peptide chain is cleaved into beta and alpha chains, and the alpha chain N-terminal cysteine is deaminated and oxidized to form a reactive pyruvoyl group.

It carries out the reaction acetyl phosphate + methylamine + [thioredoxin]-disulfide + H2O = sarcosine + [thioredoxin]-dithiol + phosphate + H(+). In the first step of sarcosine reductase, the substrate is bound to component PB via a Schiff base intermediate. Then the PB-activated substrate is nucleophilically attacked by the selenol anion of component PA to transform it to a carboxymethylated selenoether and the respective amine. By action of component PC, acetyl phosphate is formed, leaving component PA in its oxidized state. Finally component PA becomes reduced by the thioredoxin system to start a new catalytic cycle of reductive deamination. The chain is Sarcosine reductase complex component B subunit alpha (grdG) from Peptoclostridium acidaminophilum (Eubacterium acidaminophilum).